A 549-amino-acid polypeptide reads, in one-letter code: Dihydroxy-acid dehydratase (549 aa).

A Mg(2+)-binding site is contributed by D78. C119 is a [2Fe-2S] cluster binding site. Mg(2+) contacts are provided by D120 and K121. K121 carries the N6-carboxylysine modification. Position 192 (C192) interacts with [2Fe-2S] cluster. E439 provides a ligand contact to Mg(2+). S465 acts as the Proton acceptor in catalysis.

The protein belongs to the IlvD/Edd family. In terms of assembly, homodimer. [2Fe-2S] cluster is required as a cofactor. Mg(2+) serves as cofactor.

It catalyses the reaction (2R)-2,3-dihydroxy-3-methylbutanoate = 3-methyl-2-oxobutanoate + H2O. The enzyme catalyses (2R,3R)-2,3-dihydroxy-3-methylpentanoate = (S)-3-methyl-2-oxopentanoate + H2O. It participates in amino-acid biosynthesis; L-isoleucine biosynthesis; L-isoleucine from 2-oxobutanoate: step 3/4. Its pathway is amino-acid biosynthesis; L-valine biosynthesis; L-valine from pyruvate: step 3/4. Functionally, functions in the biosynthesis of branched-chain amino acids. Catalyzes the dehydration of (2R,3R)-2,3-dihydroxy-3-methylpentanoate (2,3-dihydroxy-3-methylvalerate) into 2-oxo-3-methylpentanoate (2-oxo-3-methylvalerate) and of (2R)-2,3-dihydroxy-3-methylbutanoate (2,3-dihydroxyisovalerate) into 2-oxo-3-methylbutanoate (2-oxoisovalerate), the penultimate precursor to L-isoleucine and L-valine, respectively. The protein is Dihydroxy-acid dehydratase of Endomicrobium trichonymphae.